The following is a 276-amino-acid chain: Syntaxin-12 (276 aa).

Ser2 carries the post-translational modification N-acetylserine. The Cytoplasmic segment spans residues 2-248 (SYGPLDMYRN…RAAYYQKKSR (247 aa)). The stretch at 33-131 (IQRISQATAQ…RRVSEKEKES (99 aa)) forms a coiled coil. Phosphoserine is present on residues Ser139, Ser142, Ser218, and Ser225. The region spanning 178-240 (LELIKERETA…ERATEQLQRA (63 aa)) is the t-SNARE coiled-coil homology domain. The helical; Anchor for type IV membrane protein transmembrane segment at 249–269 (KKMCILVLVLSVIILILGLII) threads the bilayer. At 270 to 276 (WLVYKTK) the chain is on the vesicular side.

It belongs to the syntaxin family. In terms of assembly, interacts with NAPA and SNAP23. Identified in a complex containing STX6, STX12, VAMP4 and VTI1A. Associates with the BLOC-1 complex. Interacts with BLOC1S6. Interacts with GRIPAP1. Forms a complex with GRIP1, GRIA2 and NSG1; controls the intracellular fate of AMPAR and the endosomal sorting of the GRIA2 subunit toward recycling and membrane targeting. Interacts with NSG1. Interacts with TPC1. Interacts (via N-terminus) with VPS13B.

It localises to the endosome membrane. Its subcellular location is the golgi apparatus membrane. It is found in the endomembrane system. The protein resides in the early endosome membrane. The protein localises to the recycling endosome membrane. Functionally, SNARE promoting fusion of transport vesicles with target membranes. Together with SNARE STX6, promotes movement of vesicles from endosomes to the cell membrane, and may therefore function in the endocytic recycling pathway. Through complex formation with GRIP1, GRIA2 and NSG1 controls the intracellular fate of AMPAR and the endosomal sorting of the GRIA2 subunit toward recycling and membrane targeting. This is Syntaxin-12 (STX12) from Homo sapiens (Human).